Reading from the N-terminus, the 170-residue chain is CASP-like protein 2D1 (170 aa).

At 1-4 the chain is on the cytoplasmic side; the sequence is MLKL. A helical transmembrane segment spans residues 5–25; sequence LDFSLRLSVIPLSVATIWLTV. Topologically, residues 26-47 are extracellular; the sequence is TNKQDNSIYGYLKYSDLTGLKY. The helical transmembrane segment at 48–68 threads the bilayer; sequence MVFISGICASYAFIAAVSTWI. The Cytoplasmic portion of the chain corresponds to 69–83; sequence RCIVTKTWLFFVSDQ. Residues 84–104 form a helical membrane-spanning segment; sequence IVAYLMVTSGTAVLEILYLAY. At 105-127 the chain is on the extracellular side; that stretch reads NGDREVSWSEACTSYGKFCYRMK. A helical membrane pass occupies residues 128-148; that stretch reads LAVILHALALSCFIILAVISA. The Cytoplasmic segment spans residues 149–170; the sequence is YRAFSIFEPPLVPSKVVEEDRA.

The protein belongs to the Casparian strip membrane proteins (CASP) family. In terms of assembly, homodimer and heterodimers.

It localises to the cell membrane. This chain is CASP-like protein 2D1, found in Populus trichocarpa (Western balsam poplar).